The primary structure comprises 313 residues: Porphobilinogen deaminase (313 aa).

S-(dipyrrolylmethanemethyl)cysteine is present on Cys241.

It belongs to the HMBS family. As to quaternary structure, monomer. It depends on dipyrromethane as a cofactor.

The enzyme catalyses 4 porphobilinogen + H2O = hydroxymethylbilane + 4 NH4(+). The protein operates within porphyrin-containing compound metabolism; protoporphyrin-IX biosynthesis; coproporphyrinogen-III from 5-aminolevulinate: step 2/4. It participates in porphyrin-containing compound metabolism; chlorophyll biosynthesis. Tetrapolymerization of the monopyrrole PBG into the hydroxymethylbilane pre-uroporphyrinogen in several discrete steps. In Chlorobium chlorochromatii (strain CaD3), this protein is Porphobilinogen deaminase.